A 93-amino-acid chain; its full sequence is Small ribosomal subunit protein uS19c (93 aa).

Residues glutamate 73 to proline 93 are disordered. A compositionally biased stretch (basic residues) spans phenylalanine 80–proline 93.

This sequence belongs to the universal ribosomal protein uS19 family.

Its subcellular location is the plastid. It localises to the chloroplast. Functionally, protein S19 forms a complex with S13 that binds strongly to the 16S ribosomal RNA. This Mesostigma viride (Green alga) protein is Small ribosomal subunit protein uS19c (rps19).